The chain runs to 426 residues: Branched-chain amino acid permease BrnQ (426 aa).

The next 12 helical transmembrane spans lie at 11-31 (LMLF…MLGL), 41-61 (ILGF…AVVL), 76-96 (IFGL…YALP), 111-131 (NALY…ALSW), 140-160 (LGKW…VLSV), 186-206 (GYMT…ISAF), 219-239 (VVSA…LGSI), 268-288 (IMFV…LISA), 296-316 (LLPG…SFGV), 324-344 (VLAV…TLVF), 358-378 (TYLF…IPAL), and 390-410 (MSLG…AIDW).

Belongs to the branched chain amino acid transporter family.

It is found in the cell membrane. In terms of biological role, branched chain amino acid transport system, which transports isoleucine. The chain is Branched-chain amino acid permease BrnQ from Corynebacterium glutamicum (strain ATCC 13032 / DSM 20300 / JCM 1318 / BCRC 11384 / CCUG 27702 / LMG 3730 / NBRC 12168 / NCIMB 10025 / NRRL B-2784 / 534).